The primary structure comprises 323 residues: Oligodendrocyte transcription factor 2 (323 aa).

2 stretches are compositionally biased toward polar residues: residues 1–13 and 27–45; these read MDSDASLVSSRPS and KGSSGSAFTGGTVSSSTPS. The segment at 1–107 is disordered; the sequence is MDSDASLVSS…KKQMTEPELQ (107 aa). Residues 76–93 show a composition bias toward low complexity; sequence KSSSSSTSSSTSSAAASS. The bHLH domain maps to 108–162; it reads QLRLKINSRERKRMHDLNIAMDGLREVMPYAHGPSVRKLSKIATLLLARNYILML.

As to quaternary structure, interacts with NKX2-2. Interacts with ZNF488. In terms of tissue distribution, expressed in the brain, in oligodendrocytes. Strongly expressed in oligodendrogliomas, while expression is weak to moderate in astrocytomas. Expression in glioblastomas highly variable.

It is found in the nucleus. It localises to the cytoplasm. In terms of biological role, required for oligodendrocyte and motor neuron specification in the spinal cord, as well as for the development of somatic motor neurons in the hindbrain. Functions together with ZNF488 to promote oligodendrocyte differentiation. Cooperates with OLIG1 to establish the pMN domain of the embryonic neural tube. Antagonist of V2 interneuron and of NKX2-2-induced V3 interneuron development. This is Oligodendrocyte transcription factor 2 (OLIG2) from Homo sapiens (Human).